Reading from the N-terminus, the 422-residue chain is CRISPR-associated endodeoxyribonuclease Cas12f1 (422 aa).

Positions 1-126 (MIKVYRYEIV…PSYKRDIPLD (126 aa)) are recognition domain (REC). Positions 127–211 (LIKENISVNR…YLNISYDFEP (85 aa)) are wedge domain (WED). The tract at residues 212 to 220 (QTRVLDLNK) is linker. Positions 221–370 (IMGIDLGVAV…IKIDPQYTSQ (150 aa)) are ruvC-I. Catalysis depends on residues Asp225 and Glu324. The target nucleic acid-binding (TNB) stretch occupies residues 371 to 399 (RCSECGNIDSGNRIGQAIFKCRACGYEAN). Zn(2+) is bound by residues Cys372, Cys375, Cys391, and Cys394. The segment at 400–420 (ADYNAARNIAIPNIDKIIAES) is ruvC-II. Asp401 is a catalytic residue.

Belongs to the CRISPR-associated endonuclease Cas12f family. An asymmetric homodimer. Guide RNA is probably required for dimerization. It depends on Mg(2+) as a cofactor. Requires Zn(2+) as cofactor.

In terms of biological role, CRISPR (clustered regularly interspaced short palindromic repeat), is an adaptive immune system that provides protection against mobile genetic elements (viruses, transposable elements and conjugative plasmids). CRISPR clusters contain sequences complementary to antecedent mobile elements and target invading nucleic acids. CRISPR clusters are transcribed and processed into CRISPR RNA (crRNA), which requires a trans-encoded small RNA (tracrRNA), but not this protein. Recognizes a short motif in the CRISPR repeat sequences (the 5' PAM or protospacer adjacent motif, YTT in this organism) to help distinguish self versus nonself, as targets within the CRISPR locus do not have PAMs. Has dsDNA endonuclease activity upon expression in E.coli of this protein, a mini CRISPR array and the probable tracrRNA. Plasmid cleavage is centered around positions 19-24 base pairs 3' of PAM. The mini system protects E.coli against transformation by foreign plasmids. This is CRISPR-associated endodeoxyribonuclease Cas12f1 from Sulfoacidibacillus thermotolerans (Acidibacillus sulfuroxidans).